The chain runs to 171 residues: MSTEQELQIGKVVKSHGIRGEVVVELSTDDPDIRFAIGEVLNGKQAGKEHSLTIDAARMHQGRLLVKFAEVPDRTAADSLRGTRFFAAPLEDEDDEDGFYDHELESLRVIHEGEDIGEVTGVMHGPAGEILEVRLTSGKETLIPFVHAIVPEVDLEEGTATITPPEGLLDL.

Residues 96 to 168 form the PRC barrel domain; the sequence is EDGFYDHELE…TATITPPEGL (73 aa).

This sequence belongs to the RimM family. Binds ribosomal protein uS19.

It localises to the cytoplasm. Its function is as follows. An accessory protein needed during the final step in the assembly of 30S ribosomal subunit, possibly for assembly of the head region. Essential for efficient processing of 16S rRNA. May be needed both before and after RbfA during the maturation of 16S rRNA. It has affinity for free ribosomal 30S subunits but not for 70S ribosomes. This Corynebacterium glutamicum (strain R) protein is Ribosome maturation factor RimM.